The chain runs to 248 residues: Ribosomal RNA small subunit methyltransferase G (248 aa).

Residues Gly-85, Phe-90, 137–138 (IE), and Arg-156 contribute to the S-adenosyl-L-methionine site.

This sequence belongs to the methyltransferase superfamily. RNA methyltransferase RsmG family.

The protein resides in the cytoplasm. Functionally, specifically methylates the N7 position of a guanine in 16S rRNA. The sequence is that of Ribosomal RNA small subunit methyltransferase G from Parasynechococcus marenigrum (strain WH8102).